A 635-amino-acid polypeptide reads, in one-letter code: Threonine--tRNA ligase (635 aa).

The TGS domain occupies 1–61; that stretch reads MINISFPDGS…DNDCRLRILT (61 aa). The interval 242–533 is catalytic; the sequence is DHRKLGKELD…LIEEYAGRFP (292 aa). Cysteine 333, histidine 384, and histidine 510 together coordinate Zn(2+).

Belongs to the class-II aminoacyl-tRNA synthetase family. As to quaternary structure, homodimer. Zn(2+) serves as cofactor.

It localises to the cytoplasm. The enzyme catalyses tRNA(Thr) + L-threonine + ATP = L-threonyl-tRNA(Thr) + AMP + diphosphate + H(+). Catalyzes the attachment of threonine to tRNA(Thr) in a two-step reaction: L-threonine is first activated by ATP to form Thr-AMP and then transferred to the acceptor end of tRNA(Thr). Also edits incorrectly charged L-seryl-tRNA(Thr). In Rickettsia bellii (strain RML369-C), this protein is Threonine--tRNA ligase.